Here is a 105-residue protein sequence, read N- to C-terminus: NADH-quinone oxidoreductase subunit K (105 aa).

A run of 3 helical transmembrane segments spans residues 9–29 (PNYYLVLAAVLFTIGAAGVLV), 34–54 (IVLFMCVELMLNAANLTLVTF), and 65–85 (IIAFFVMVVAAAEVVVGLAII).

It belongs to the complex I subunit 4L family. NDH-1 is composed of 14 different subunits. Subunits NuoA, H, J, K, L, M, N constitute the membrane sector of the complex.

The protein localises to the cell membrane. The catalysed reaction is a quinone + NADH + 5 H(+)(in) = a quinol + NAD(+) + 4 H(+)(out). NDH-1 shuttles electrons from NADH, via FMN and iron-sulfur (Fe-S) centers, to quinones in the respiratory chain. The immediate electron acceptor for the enzyme in this species is believed to be a menaquinone. Couples the redox reaction to proton translocation (for every two electrons transferred, four hydrogen ions are translocated across the cytoplasmic membrane), and thus conserves the redox energy in a proton gradient. The protein is NADH-quinone oxidoreductase subunit K of Salinispora arenicola (strain CNS-205).